Reading from the N-terminus, the 72-residue chain is Translation initiation factor IF-1 (72 aa).

The S1-like domain occupies 1 to 72 (MAKEDMIEVE…TRGRITYRFK (72 aa)).

This sequence belongs to the IF-1 family. As to quaternary structure, component of the 30S ribosomal translation pre-initiation complex which assembles on the 30S ribosome in the order IF-2 and IF-3, IF-1 and N-formylmethionyl-tRNA(fMet); mRNA recruitment can occur at any time during PIC assembly.

The protein localises to the cytoplasm. Its function is as follows. One of the essential components for the initiation of protein synthesis. Stabilizes the binding of IF-2 and IF-3 on the 30S subunit to which N-formylmethionyl-tRNA(fMet) subsequently binds. Helps modulate mRNA selection, yielding the 30S pre-initiation complex (PIC). Upon addition of the 50S ribosomal subunit IF-1, IF-2 and IF-3 are released leaving the mature 70S translation initiation complex. The polypeptide is Translation initiation factor IF-1 (Enterococcus faecalis (strain ATCC 700802 / V583)).